A 132-amino-acid chain; its full sequence is Histone H2A (132 aa).

The span at 1-10 (MTGGKSGGKA) shows a compositional bias: gly residues. The interval 1 to 24 (MTGGKSGGKASGSKNAQSRSSKAG) is disordered. N6-acetyllysine occurs at positions 5 and 9. Gln-106 bears the N5-methylglutamine mark. Ser-129 is modified (phosphoserine). Positions 129–130 (SQ) match the [ST]-Q motif motif.

It belongs to the histone H2A family. As to quaternary structure, the nucleosome is a histone octamer containing two molecules each of H2A, H2B, H3 and H4 assembled in one H3-H4 heterotetramer and two H2A-H2B heterodimers. The octamer wraps approximately 147 bp of DNA. In terms of processing, phosphorylated to form H2AS128ph (gamma-H2A) in response to DNA double-strand breaks (DSBs) generated by exogenous genotoxic agents and by stalled replication forks. Phosphorylation is dependent on the DNA damage checkpoint kinases mec1/ATR and tel1/ATM, spreads on either side of a detected DSB site and may mark the surrounding chromatin for recruitment of proteins required for DNA damage signaling and repair. Gamma-H2A is removed from the DNA prior to the strand invasion-primer extension step of the repair process and subsequently dephosphorylated. Dephosphorylation is necessary for efficient recovery from the DNA damage checkpoint. Acetylated by esa1 to form H2AK4ac and H2AK7ac.

It localises to the nucleus. The protein localises to the chromosome. Its function is as follows. Core component of nucleosome which plays a central role in DNA double strand break (DSB) repair. Nucleosomes wrap and compact DNA into chromatin, limiting DNA accessibility to the cellular machineries which require DNA as a template. Histones thereby play a central role in transcription regulation, DNA repair, DNA replication and chromosomal stability. DNA accessibility is regulated via a complex set of post-translational modifications of histones, also called histone code, and nucleosome remodeling. The sequence is that of Histone H2A (htaA) from Emericella nidulans (strain FGSC A4 / ATCC 38163 / CBS 112.46 / NRRL 194 / M139) (Aspergillus nidulans).